Reading from the N-terminus, the 487-residue chain is Phosphoglucosamine mutase (487 aa).

S134 acts as the Phosphoserine intermediate in catalysis. S134, D277, D279, and D281 together coordinate Mg(2+). S134 is modified (phosphoserine).

Belongs to the phosphohexose mutase family. It depends on Mg(2+) as a cofactor. Post-translationally, activated by phosphorylation.

It catalyses the reaction alpha-D-glucosamine 1-phosphate = D-glucosamine 6-phosphate. Catalyzes the conversion of glucosamine-6-phosphate to glucosamine-1-phosphate. The polypeptide is Phosphoglucosamine mutase (Gloeothece citriformis (strain PCC 7424) (Cyanothece sp. (strain PCC 7424))).